The chain runs to 117 residues: Large ribosomal subunit protein bL17 (117 aa).

The protein belongs to the bacterial ribosomal protein bL17 family. Part of the 50S ribosomal subunit. Contacts protein L32.

This Campylobacter jejuni subsp. jejuni serotype O:6 (strain 81116 / NCTC 11828) protein is Large ribosomal subunit protein bL17.